Here is a 450-residue protein sequence, read N- to C-terminus: tRNA modification GTPase MnmE (450 aa).

Residues Arg-23, Glu-80, and Arg-123 each coordinate (6S)-5-formyl-5,6,7,8-tetrahydrofolate. In terms of domain architecture, TrmE-type G spans 219–372 (GLHVVLAGKP…LRQRLLQLAG (154 aa)). Asn-229 provides a ligand contact to K(+). Residues 229–234 (NVGKSS), 248–254 (TPIAGTT), 273–276 (DTAG), and 353–355 (SAR) contribute to the GTP site. Ser-233 provides a ligand contact to Mg(2+). The K(+) site is built by Thr-248, Ile-250, and Thr-253. A Mg(2+)-binding site is contributed by Thr-254. Lys-450 contributes to the (6S)-5-formyl-5,6,7,8-tetrahydrofolate binding site.

It belongs to the TRAFAC class TrmE-Era-EngA-EngB-Septin-like GTPase superfamily. TrmE GTPase family. As to quaternary structure, homodimer. Heterotetramer of two MnmE and two MnmG subunits. K(+) is required as a cofactor.

The protein resides in the cytoplasm. Its function is as follows. Exhibits a very high intrinsic GTPase hydrolysis rate. Involved in the addition of a carboxymethylaminomethyl (cmnm) group at the wobble position (U34) of certain tRNAs, forming tRNA-cmnm(5)s(2)U34. The protein is tRNA modification GTPase MnmE of Bordetella parapertussis (strain 12822 / ATCC BAA-587 / NCTC 13253).